A 63-amino-acid polypeptide reads, in one-letter code: Small ribosomal subunit protein eS17 (63 aa).

This sequence belongs to the eukaryotic ribosomal protein eS17 family.

The chain is Small ribosomal subunit protein eS17 from Methanococcus maripaludis (strain C6 / ATCC BAA-1332).